A 233-amino-acid chain; its full sequence is Putative T-box protein 41 (233 aa).

The segment at residues 1–146 (MTVTRNGCRI…MNPHARHFLK (146 aa)) is a DNA-binding region (T-box).

The protein localises to the nucleus. The polypeptide is Putative T-box protein 41 (tbx-41) (Caenorhabditis elegans).